The primary structure comprises 101 residues: Small ribosomal subunit protein uS10 (101 aa).

Belongs to the universal ribosomal protein uS10 family. In terms of assembly, part of the 30S ribosomal subunit.

Involved in the binding of tRNA to the ribosomes. The polypeptide is Small ribosomal subunit protein uS10 (Bacteroides fragilis (strain ATCC 25285 / DSM 2151 / CCUG 4856 / JCM 11019 / LMG 10263 / NCTC 9343 / Onslow / VPI 2553 / EN-2)).